Consider the following 257-residue polypeptide: Acetylglutamate kinase (257 aa).

Residues 43-44, Arg65, and Asn157 contribute to the substrate site; that span reads GG. ATP-binding positions include 180–185 and 208–210; these read DVSGIL and IIT.

The protein belongs to the acetylglutamate kinase family. ArgB subfamily. In terms of assembly, homodimer.

The protein localises to the cytoplasm. It catalyses the reaction N-acetyl-L-glutamate + ATP = N-acetyl-L-glutamyl 5-phosphate + ADP. The protein operates within amino-acid biosynthesis; L-arginine biosynthesis; N(2)-acetyl-L-ornithine from L-glutamate: step 2/4. Functionally, catalyzes the ATP-dependent phosphorylation of N-acetyl-L-glutamate. In Pectobacterium atrosepticum (strain SCRI 1043 / ATCC BAA-672) (Erwinia carotovora subsp. atroseptica), this protein is Acetylglutamate kinase.